The following is a 145-amino-acid chain: Galectin-5 (145 aa).

N-acetylserine is present on S2. One can recognise a Galectin domain in the interval 17 to 145; sequence FFTSIPNGLY…GDIQLTHVET (129 aa). An a beta-D-galactoside-binding site is contributed by 77–83; the sequence is WGPEERS.

Monomer. As to expression, erythrocytes.

Functionally, may function in erythrocyte differentiation. This Rattus norvegicus (Rat) protein is Galectin-5 (Lgals5).